Here is a 323-residue protein sequence, read N- to C-terminus: tRNA U34 carboxymethyltransferase (323 aa).

Carboxy-S-adenosyl-L-methionine-binding positions include Lys-91, Trp-105, Lys-110, Gly-130, Ile-180–Glu-181, Met-196, Tyr-200, and Arg-315.

This sequence belongs to the class I-like SAM-binding methyltransferase superfamily. CmoB family. Homotetramer.

The enzyme catalyses carboxy-S-adenosyl-L-methionine + 5-hydroxyuridine(34) in tRNA = 5-carboxymethoxyuridine(34) in tRNA + S-adenosyl-L-homocysteine + H(+). Functionally, catalyzes carboxymethyl transfer from carboxy-S-adenosyl-L-methionine (Cx-SAM) to 5-hydroxyuridine (ho5U) to form 5-carboxymethoxyuridine (cmo5U) at position 34 in tRNAs. The chain is tRNA U34 carboxymethyltransferase from Geobacter sp. (strain M21).